The sequence spans 448 residues: UDP-N-acetylmuramoylalanine--D-glutamate ligase (448 aa).

Position 116-122 (116-122 (GSNAKST)) interacts with ATP.

The protein belongs to the MurCDEF family.

The protein localises to the cytoplasm. The catalysed reaction is UDP-N-acetyl-alpha-D-muramoyl-L-alanine + D-glutamate + ATP = UDP-N-acetyl-alpha-D-muramoyl-L-alanyl-D-glutamate + ADP + phosphate + H(+). It functions in the pathway cell wall biogenesis; peptidoglycan biosynthesis. Functionally, cell wall formation. Catalyzes the addition of glutamate to the nucleotide precursor UDP-N-acetylmuramoyl-L-alanine (UMA). This is UDP-N-acetylmuramoylalanine--D-glutamate ligase from Pseudomonas fluorescens (strain Pf0-1).